We begin with the raw amino-acid sequence, 103 residues long: V-type ATP synthase subunit F (103 aa).

This sequence belongs to the V-ATPase F subunit family.

Produces ATP from ADP in the presence of a proton gradient across the membrane. The polypeptide is V-type ATP synthase subunit F (Clostridium botulinum (strain Alaska E43 / Type E3)).